The sequence spans 373 residues: Dual-specificity RNA methyltransferase RlmN (373 aa).

E94 acts as the Proton acceptor in catalysis. The Radical SAM core domain maps to 100–339; sequence EDDRATLCVS…VIVRKTRGDD (240 aa). A disulfide bridge links C107 with C344. Residues C114, C118, and C121 each coordinate [4Fe-4S] cluster. S-adenosyl-L-methionine contacts are provided by residues 168–169, S200, 222–224, and N301; these read GE and SIH. C344 acts as the S-methylcysteine intermediate in catalysis.

This sequence belongs to the radical SAM superfamily. RlmN family. [4Fe-4S] cluster serves as cofactor.

It localises to the cytoplasm. The catalysed reaction is adenosine(2503) in 23S rRNA + 2 reduced [2Fe-2S]-[ferredoxin] + 2 S-adenosyl-L-methionine = 2-methyladenosine(2503) in 23S rRNA + 5'-deoxyadenosine + L-methionine + 2 oxidized [2Fe-2S]-[ferredoxin] + S-adenosyl-L-homocysteine. It catalyses the reaction adenosine(37) in tRNA + 2 reduced [2Fe-2S]-[ferredoxin] + 2 S-adenosyl-L-methionine = 2-methyladenosine(37) in tRNA + 5'-deoxyadenosine + L-methionine + 2 oxidized [2Fe-2S]-[ferredoxin] + S-adenosyl-L-homocysteine. In terms of biological role, specifically methylates position 2 of adenine 2503 in 23S rRNA and position 2 of adenine 37 in tRNAs. m2A2503 modification seems to play a crucial role in the proofreading step occurring at the peptidyl transferase center and thus would serve to optimize ribosomal fidelity. This Shewanella woodyi (strain ATCC 51908 / MS32) protein is Dual-specificity RNA methyltransferase RlmN.